We begin with the raw amino-acid sequence, 225 residues long: Peptidyl-tRNA hydrolase (225 aa).

Y27 is a binding site for tRNA. H32 functions as the Proton acceptor in the catalytic mechanism. TRNA-binding residues include Y78, N80, and N126. The disordered stretch occupies residues F198–S225.

The protein belongs to the PTH family. Monomer.

The protein resides in the cytoplasm. It carries out the reaction an N-acyl-L-alpha-aminoacyl-tRNA + H2O = an N-acyl-L-amino acid + a tRNA + H(+). Its function is as follows. Hydrolyzes ribosome-free peptidyl-tRNAs (with 1 or more amino acids incorporated), which drop off the ribosome during protein synthesis, or as a result of ribosome stalling. In terms of biological role, catalyzes the release of premature peptidyl moieties from peptidyl-tRNA molecules trapped in stalled 50S ribosomal subunits, and thus maintains levels of free tRNAs and 50S ribosomes. The polypeptide is Peptidyl-tRNA hydrolase (Synechococcus sp. (strain JA-3-3Ab) (Cyanobacteria bacterium Yellowstone A-Prime)).